Here is a 78-residue protein sequence, read N- to C-terminus: MIIPWQQVDSETLDNLLEAFVLREGTDYGEHERSLTEKVADVRRQLVSGEAVLVWSELHETINIMPRGSFRAGAEEQQ.

It belongs to the UPF0270 family.

The chain is UPF0270 protein YPO0179/y3960/YP_0178 from Yersinia pestis.